A 484-amino-acid chain; its full sequence is tRNA sulfurtransferase (484 aa).

Positions 63 to 167 (REMIERLTCT…LDRLFVIHRQ (105 aa)) constitute a THUMP domain. ATP contacts are provided by residues 185–186 (LM), Lys267, Gly289, and Gln298. Cys346 and Cys457 are joined by a disulfide. The 79-residue stretch at 405–483 (VLPGQIVIDI…GHTNVRVYRP (79 aa)) folds into the Rhodanese domain. The active-site Cysteine persulfide intermediate is the Cys457.

This sequence belongs to the ThiI family.

The protein resides in the cytoplasm. The enzyme catalyses [ThiI sulfur-carrier protein]-S-sulfanyl-L-cysteine + a uridine in tRNA + 2 reduced [2Fe-2S]-[ferredoxin] + ATP + H(+) = [ThiI sulfur-carrier protein]-L-cysteine + a 4-thiouridine in tRNA + 2 oxidized [2Fe-2S]-[ferredoxin] + AMP + diphosphate. It catalyses the reaction [ThiS sulfur-carrier protein]-C-terminal Gly-Gly-AMP + S-sulfanyl-L-cysteinyl-[cysteine desulfurase] + AH2 = [ThiS sulfur-carrier protein]-C-terminal-Gly-aminoethanethioate + L-cysteinyl-[cysteine desulfurase] + A + AMP + 2 H(+). It participates in cofactor biosynthesis; thiamine diphosphate biosynthesis. Catalyzes the ATP-dependent transfer of a sulfur to tRNA to produce 4-thiouridine in position 8 of tRNAs, which functions as a near-UV photosensor. Also catalyzes the transfer of sulfur to the sulfur carrier protein ThiS, forming ThiS-thiocarboxylate. This is a step in the synthesis of thiazole, in the thiamine biosynthesis pathway. The sulfur is donated as persulfide by IscS. This Pseudomonas aeruginosa (strain LESB58) protein is tRNA sulfurtransferase.